Consider the following 83-residue polypeptide: Arminin 3a (83 aa).

The signal sequence occupies residues 1-18; that stretch reads MKTVFAILFLTFIALTCA. A propeptide spanning residues 19–57 is cleaved from the precursor; it reads RNYEDLKEKIKNEVEREIFEDLEEESDELENNFKKFNDA. Position 80 is an alanine amide (A80).

The protein belongs to the arminin family. Expressed in entodermal epithelium along the body column.

Its subcellular location is the secreted. It localises to the target cell membrane. In terms of biological role, antimicrobial peptide with a broad-spectrum antimicrobial activity. Keeps its antibacterial activity under a wide range of salt concentrations that mimic physiological conditions of human blood, which is surprising, since Hydra is an obligate freshwater animal with nearly no salt tolerance. Does not affect red blood cells. In Hydra vulgaris (Hydra), this protein is Arminin 3a.